We begin with the raw amino-acid sequence, 213 residues long: Charged multivesicular body protein 2b (213 aa).

Residue alanine 2 is modified to N-acetylalanine. The stretch at glutamine 25–lysine 55 forms a coiled coil. Low complexity predominate over residues alanine 179–serine 194. The disordered stretch occupies residues alanine 179–serine 199. Serine 199 carries the post-translational modification Phosphoserine. The MIT-interacting motif signature appears at glutamate 201–glycine 211.

This sequence belongs to the SNF7 family. In terms of assembly, probable core component of the endosomal sorting required for transport complex III (ESCRT-III). ESCRT-III components are thought to multimerize to form a flat lattice on the perimeter membrane of the endosome. Several assembly forms of ESCRT-III may exist that interact and act sequentially. Interacts with CHMP2A. Interacts with VPS4A. Interacts with VPS4B; the interaction is direct. As to expression, widely expressed. Expressed in brain, heart, skeletal muscle, spleen, kidney, liver, small intestine, pancreas, lung, placenta and leukocytes. In brain, it is expressed in cerebellum, cerebral cortex, medulla, spinal cord, occipital lobe, frontal lobe, temporal lobe and putamen.

It is found in the cytoplasm. Its subcellular location is the cytosol. The protein resides in the late endosome membrane. Its function is as follows. Probable core component of the endosomal sorting required for transport complex III (ESCRT-III) which is involved in multivesicular bodies (MVBs) formation and sorting of endosomal cargo proteins into MVBs. MVBs contain intraluminal vesicles (ILVs) that are generated by invagination and scission from the limiting membrane of the endosome and mostly are delivered to lysosomes enabling degradation of membrane proteins, such as stimulated growth factor receptors, lysosomal enzymes and lipids. The MVB pathway appears to require the sequential function of ESCRT-O, -I,-II and -III complexes. ESCRT-III proteins mostly dissociate from the invaginating membrane before the ILV is released. The ESCRT machinery also functions in topologically equivalent membrane fission events, such as the terminal stages of cytokinesis and the budding of enveloped viruses (HIV-1 and other lentiviruses). ESCRT-III proteins are believed to mediate the necessary vesicle extrusion and/or membrane fission activities, possibly in conjunction with the AAA ATPase VPS4. In Homo sapiens (Human), this protein is Charged multivesicular body protein 2b (CHMP2B).